Reading from the N-terminus, the 151-residue chain is UPF0178 protein Suden_0449 (151 aa).

The protein belongs to the UPF0178 family.

This Sulfurimonas denitrificans (strain ATCC 33889 / DSM 1251) (Thiomicrospira denitrificans (strain ATCC 33889 / DSM 1251)) protein is UPF0178 protein Suden_0449.